The following is a 37-amino-acid chain: Large ribosomal subunit protein bL36 (37 aa).

Belongs to the bacterial ribosomal protein bL36 family.

This chain is Large ribosomal subunit protein bL36, found in Desulforamulus reducens (strain ATCC BAA-1160 / DSM 100696 / MI-1) (Desulfotomaculum reducens).